The sequence spans 418 residues: L-rhamnose isomerase (418 aa).

3 residues coordinate Mn(2+): H262, D294, and D296.

Belongs to the rhamnose isomerase family. In terms of assembly, homotetramer. Mn(2+) is required as a cofactor.

Its subcellular location is the cytoplasm. It catalyses the reaction L-rhamnopyranose = L-rhamnulose. The protein operates within carbohydrate degradation; L-rhamnose degradation; glycerone phosphate from L-rhamnose: step 1/3. Its function is as follows. Catalyzes the interconversion of L-rhamnose and L-rhamnulose. The chain is L-rhamnose isomerase from Yersinia pseudotuberculosis serotype IB (strain PB1/+).